Reading from the N-terminus, the 45-residue chain is Large ribosomal subunit protein bL34 (45 aa).

The segment at 1–45 (MTKRTFGGTSRKRKRVSGFRVRMRSHTGRRVIKSRRKRGRDRIAV) is disordered. Residues 10 to 45 (SRKRKRVSGFRVRMRSHTGRRVIKSRRKRGRDRIAV) are compositionally biased toward basic residues.

This sequence belongs to the bacterial ribosomal protein bL34 family.

This is Large ribosomal subunit protein bL34 from Prochlorococcus marinus (strain MIT 9515).